The chain runs to 209 residues: Large ribosomal subunit protein uL3 (209 aa).

Q150 is modified (N5-methylglutamine).

The protein belongs to the universal ribosomal protein uL3 family. Part of the 50S ribosomal subunit. Forms a cluster with proteins L14 and L19. Post-translationally, methylated by PrmB.

In terms of biological role, one of the primary rRNA binding proteins, it binds directly near the 3'-end of the 23S rRNA, where it nucleates assembly of the 50S subunit. This is Large ribosomal subunit protein uL3 from Salmonella paratyphi C (strain RKS4594).